A 290-amino-acid polypeptide reads, in one-letter code: UPF0761 membrane protein YihY (290 aa).

Helical transmembrane passes span 44-64, 104-124, 140-160, 183-203, 210-230, and 244-264; these read LLSL…FPMF, VGAC…DSAL, FAVY…SLAI, IFPL…VPTI, AIVG…GFAL, and VLAV…IVLL.

This sequence belongs to the UPF0761 family.

It is found in the cell inner membrane. The chain is UPF0761 membrane protein YihY from Escherichia coli O139:H28 (strain E24377A / ETEC).